The chain runs to 322 residues: Acetyl-coenzyme A carboxylase carboxyl transferase subunit alpha (322 aa).

Residues 39-296 form the CoA carboxyltransferase C-terminal domain; it reads DLTALKKQLI…HSKLVTELNY (258 aa).

Belongs to the AccA family. As to quaternary structure, acetyl-CoA carboxylase is a heterohexamer composed of biotin carboxyl carrier protein (accB), biotin carboxylase (accC) and two subunits each of ACCase subunit alpha (accA) and ACCase subunit beta (accD).

Its subcellular location is the plastid. It is found in the chloroplast. It catalyses the reaction N(6)-carboxybiotinyl-L-lysyl-[protein] + acetyl-CoA = N(6)-biotinyl-L-lysyl-[protein] + malonyl-CoA. The protein operates within lipid metabolism; malonyl-CoA biosynthesis; malonyl-CoA from acetyl-CoA: step 1/1. Functionally, component of the acetyl coenzyme A carboxylase (ACC) complex. First, biotin carboxylase catalyzes the carboxylation of biotin on its carrier protein (BCCP) and then the CO(2) group is transferred by the carboxyltransferase to acetyl-CoA to form malonyl-CoA. This Antithamnion sp. (Red alga) protein is Acetyl-coenzyme A carboxylase carboxyl transferase subunit alpha.